The chain runs to 427 residues: Acyl-CoA hydrolase 2 (427 aa).

Position 15–83 (15–83) interacts with a nucleoside 3',5'-cyclic phosphate; it reads LLQKLPSSSL…FLLKQYDYFG (69 aa). Active-site charge relay system residues include aspartate 337, serine 359, and glutamine 409. The Microbody targeting signal motif lies at 425–427; that stretch reads SKL.

Belongs to the C/M/P thioester hydrolase family. In terms of assembly, homotetramer. As to expression, mostly expressed in leaves and flowers, and, to a lower extent, in seedlings and siliques.

The protein localises to the peroxisome matrix. The enzyme catalyses a fatty acyl-CoA + H2O = a fatty acid + CoA + H(+). It carries out the reaction dodecanoyl-CoA + H2O = dodecanoate + CoA + H(+). It catalyses the reaction tetradecanoyl-CoA + H2O = tetradecanoate + CoA + H(+). The catalysed reaction is octadecanoyl-CoA + H2O = octadecanoate + CoA + H(+). The enzyme catalyses (9Z)-hexadecenoyl-CoA + H2O = (9Z)-hexadecenoate + CoA + H(+). It carries out the reaction (5Z,8Z,11Z,14Z)-eicosatetraenoyl-CoA + H2O = (5Z,8Z,11Z,14Z)-eicosatetraenoate + CoA + H(+). It catalyses the reaction hexadecanoyl-CoA + H2O = hexadecanoate + CoA + H(+). The catalysed reaction is (9Z)-octadecenoyl-CoA + H2O = (9Z)-octadecenoate + CoA + H(+). The enzyme catalyses (9Z,12Z)-octadecadienoyl-CoA + H2O = (9Z,12Z)-octadecadienoate + CoA + H(+). The protein operates within lipid metabolism; fatty acid metabolism. With respect to regulation, insensitive to feedback inhibition by free coenzyme A (CoASH). In terms of biological role, catalyzes the hydrolysis of acyl-CoAs into free fatty acids and coenzyme A (CoASH), regulating their respective intracellular levels. Active with both medium chain and long chain acyl-CoAs (e.g. 12:0-CoA, 14:0-CoA, 16:0-CoA, 18:0-CoA, 16:1-CoA, 18:1-CoA, 18:2-CoA and 20:4-CoA) as substrates, palmitoleoyl-CoA (16:1-CoA) being the favorite substrate. The chain is Acyl-CoA hydrolase 2 from Arabidopsis thaliana (Mouse-ear cress).